The sequence spans 39 residues: Cytochrome b559 subunit beta (39 aa).

A helical membrane pass occupies residues 14–30 (WLAVHGLAVPTVSFLGS). H18 contributes to the heme binding site.

The protein belongs to the PsbE/PsbF family. Heterodimer of an alpha subunit and a beta subunit. PSII is composed of 1 copy each of membrane proteins PsbA, PsbB, PsbC, PsbD, PsbE, PsbF, PsbH, PsbI, PsbJ, PsbK, PsbL, PsbM, PsbT, PsbX, PsbY, PsbZ, Psb30/Ycf12, at least 3 peripheral proteins of the oxygen-evolving complex and a large number of cofactors. It forms dimeric complexes. Heme b serves as cofactor.

It localises to the plastid. Its subcellular location is the chloroplast thylakoid membrane. Functionally, this b-type cytochrome is tightly associated with the reaction center of photosystem II (PSII). PSII is a light-driven water:plastoquinone oxidoreductase that uses light energy to abstract electrons from H(2)O, generating O(2) and a proton gradient subsequently used for ATP formation. It consists of a core antenna complex that captures photons, and an electron transfer chain that converts photonic excitation into a charge separation. This Lotus japonicus (Lotus corniculatus var. japonicus) protein is Cytochrome b559 subunit beta.